Here is a 465-residue protein sequence, read N- to C-terminus: uncharacterized protein (465 aa).

3 disordered regions span residues 1–55 (MNSS…SSHQ), 70–164 (DFSE…VEGQ), and 221–313 (TTDN…KQRV). Residues 40–50 (ENYKDNSDHSN) show a composition bias toward basic and acidic residues. The segment covering 73–82 (ESFNDNQNLK) has biased composition (polar residues). The segment covering 83–134 (NFNTTDNNFNDDYNNDYDSNNDSNNDSNNDSNNDYDNESNNYFNNDSNNDSN) has biased composition (low complexity). Residues 141–150 (ETTKHKLPIE) show a composition bias toward basic and acidic residues. Over residues 221–235 (TTDNQSNTESSQENN) the composition is skewed to low complexity. 2 stretches are compositionally biased toward basic and acidic residues: residues 236–249 (VIKK…DKQP) and 259–275 (IVPK…KSIK). The span at 288-306 (IDQSNKLGKSYNTNNNNSK) shows a compositional bias: polar residues. Residues 390-423 (NKASIAELKKMRLEQRKREIEEKRRQVENKKPDS) adopt a coiled-coil conformation.

This is an uncharacterized protein from Acanthamoeba polyphaga mimivirus (APMV).